The following is a 329-amino-acid chain: GTP 3',8-cyclase (329 aa).

Residues 1 to 229 form the Radical SAM core domain; the sequence is MNQVDYLRIS…EGYVRGNGPA (229 aa). Residue Arg8 participates in GTP binding. Residues Cys15 and Cys19 each coordinate [4Fe-4S] cluster. Residue Tyr21 coordinates S-adenosyl-L-methionine. Residue Cys22 participates in [4Fe-4S] cluster binding. Arg60 serves as a coordination point for GTP. Gly64 is an S-adenosyl-L-methionine binding site. Position 91 (Thr91) interacts with GTP. S-adenosyl-L-methionine is bound at residue Ser115. Lys155 contacts GTP. Met189 is a binding site for S-adenosyl-L-methionine. Cys252 and Cys255 together coordinate [4Fe-4S] cluster. 257–259 lines the GTP pocket; that stretch reads RVR. Position 269 (Cys269) interacts with [4Fe-4S] cluster.

The protein belongs to the radical SAM superfamily. MoaA family. As to quaternary structure, monomer and homodimer. [4Fe-4S] cluster serves as cofactor.

It catalyses the reaction GTP + AH2 + S-adenosyl-L-methionine = (8S)-3',8-cyclo-7,8-dihydroguanosine 5'-triphosphate + 5'-deoxyadenosine + L-methionine + A + H(+). The protein operates within cofactor biosynthesis; molybdopterin biosynthesis. Catalyzes the cyclization of GTP to (8S)-3',8-cyclo-7,8-dihydroguanosine 5'-triphosphate. The sequence is that of GTP 3',8-cyclase from Cyanothece sp. (strain PCC 7425 / ATCC 29141).